Consider the following 112-residue polypeptide: Ribonuclease P protein component (112 aa).

It belongs to the RnpA family. As to quaternary structure, consists of a catalytic RNA component (M1 or rnpB) and a protein subunit.

It carries out the reaction Endonucleolytic cleavage of RNA, removing 5'-extranucleotides from tRNA precursor.. In terms of biological role, RNaseP catalyzes the removal of the 5'-leader sequence from pre-tRNA to produce the mature 5'-terminus. It can also cleave other RNA substrates such as 4.5S RNA. The protein component plays an auxiliary but essential role in vivo by binding to the 5'-leader sequence and broadening the substrate specificity of the ribozyme. This chain is Ribonuclease P protein component, found in Mesomycoplasma hyopneumoniae (strain 7448) (Mycoplasma hyopneumoniae).